Consider the following 436-residue polypeptide: Septin-7 (436 aa).

Residue Ser2 is modified to N-acetylserine. Position 29 is a phosphotyrosine (Tyr29). The Septin-type G domain occupies 46-315 (RGFEFTLMVV…ENYRSRKLAA (270 aa)). The interval 46 to 316 (RGFEFTLMVV…NYRSRKLAAV (271 aa)) is interaction with SEPTIN12. Residues 56–63 (GESGLGKS) are G1 motif. 56–63 (GESGLGKS) contributes to the GTP binding site. Ser76 is modified (phosphoserine). GTP is bound by residues Thr89, Gly115, and 194–202 (KADTLTPEE). Residues 112-115 (DTPG) are G3 motif. The G4 motif stretch occupies residues 193-196 (AKAD). A Phosphothreonine modification is found at Thr227. Residues Gly249 and Arg264 each contribute to the GTP site. The stretch at 331–436 (TKSPLAQMEE…EKNKKKGKIF (106 aa)) forms a coiled coil. Ser333 carries the post-translational modification Phosphoserine. Lys372 carries the post-translational modification N6-acetyllysine. The span at 377 to 409 (ELQRRHEQMKKNLEAQHKELEEKRRQFEEEKAN) shows a compositional bias: basic and acidic residues. Positions 377 to 436 (ELQRRHEQMKKNLEAQHKELEEKRRQFEEEKANWEAQQRILEQQNSSRTLEKNKKKGKIF) are disordered. A Phosphoserine modification is found at Ser423. A Phosphothreonine modification is found at Thr425.

This sequence belongs to the TRAFAC class TrmE-Era-EngA-EngB-Septin-like GTPase superfamily. Septin GTPase family. In terms of assembly, septins polymerize into heterooligomeric protein complexes that form filaments, and associate with cellular membranes, actin filaments and microtubules. GTPase activity is required for filament formation. Filaments are assembled from asymmetrical heterotrimers, composed of SEPTIN2, SEPTIN6 and SEPTIN7 that associate head-to-head to form a hexameric unit. Within the trimer, directly interacts with SEPTIN6, while interaction with SEPTIN2 seems indirect. In the absence of SEPTIN6, forms homodimers. Interacts directly with CENPE and links CENPE to septin filaments composed of SEPTIN2, SEPTIN6 and SEPTIN7. Interacts with SEPTIN8, SEPTIN9 and SEPTIN11. Component of a septin core octameric complex consisting of SEPTIN12, SEPTIN7, SEPTIN6 and SEPTIN2 or SEPTIN4 in the order 12-7-6-2-2-6-7-12 or 12-7-6-4-4-6-7-12 and located in the sperm annulus; the SEPTIN12:SEPTIN7 association is mediated by the respective GTP-binding domains. Interacts with SEPTIN2 and SEPTIN5. Expressed in the cerebral cortex (at protein level).

It is found in the cytoplasm. It localises to the chromosome. Its subcellular location is the centromere. The protein localises to the kinetochore. The protein resides in the cytoskeleton. It is found in the spindle. It localises to the cleavage furrow. Its subcellular location is the midbody. The protein localises to the cilium axoneme. The protein resides in the cell projection. It is found in the cilium. It localises to the flagellum. Functionally, filament-forming cytoskeletal GTPase. Required for normal organization of the actin cytoskeleton. Required for normal progress through mitosis. Involved in cytokinesis. Required for normal association of CENPE with the kinetochore. Plays a role in ciliogenesis and collective cell movements. Forms a filamentous structure with SEPTIN12, SEPTIN6, SEPTIN2 and probably SEPTIN4 at the sperm annulus which is required for the structural integrity and motility of the sperm tail during postmeiotic differentiation. This Mus musculus (Mouse) protein is Septin-7.